Here is a 93-residue protein sequence, read N- to C-terminus: Small ribosomal subunit protein uS19c (93 aa).

This sequence belongs to the universal ribosomal protein uS19 family.

The protein localises to the plastid. Its subcellular location is the chloroplast. Functionally, protein S19 forms a complex with S13 that binds strongly to the 16S ribosomal RNA. This chain is Small ribosomal subunit protein uS19c, found in Stigeoclonium helveticum (Green alga).